A 235-amino-acid polypeptide reads, in one-letter code: Carboxy-S-adenosyl-L-methionine synthase (235 aa).

S-adenosyl-L-methionine is bound by residues Y35, 60–62 (GCS), 83–84 (DN), N124, and R191.

This sequence belongs to the class I-like SAM-binding methyltransferase superfamily. Cx-SAM synthase family. In terms of assembly, homodimer.

It catalyses the reaction prephenate + S-adenosyl-L-methionine = carboxy-S-adenosyl-L-methionine + 3-phenylpyruvate + H2O. Catalyzes the conversion of S-adenosyl-L-methionine (SAM) to carboxy-S-adenosyl-L-methionine (Cx-SAM). This chain is Carboxy-S-adenosyl-L-methionine synthase, found in Campylobacter jejuni subsp. jejuni serotype O:2 (strain ATCC 700819 / NCTC 11168).